The following is a 237-amino-acid chain: Protein ULTRAPETALA 1 (237 aa).

The 99-residue stretch at 18–116 folds into the SAND domain; it reads EELQEMSGVN…SKTVLLKYYN (99 aa). The segment at 133 to 191 adopts a CW-type zinc-finger fold; the sequence is VCHRDEFVGCNDCGKERRFRLRSRDECRLHHNAMGDPNWKCSDFPYDKITCEEEEERGS.

Interacts with HHO5. Associates with ATX1 for trimethylating 'Lys-4' on histone H3 (H3K4me3) at flower MADS box gene loci. In terms of tissue distribution, expressed at low levels in seedlings, roots, shoots, leaves, stems, inflorescences, pollen, flowers and siliques, with highest levels dividing tissues including inflorescence.

The protein localises to the cytoplasm. It is found in the nucleus. In terms of biological role, putative transcription factor that acts as a key negative regulator of cell accumulation in shoot and floral meristems. Negatively regulates the size of the WUSCHEL (WUS)-expressing organizing center in inflorescence meristems. May act by down-regulating expression of WUS. Acts as an antirepressor that counteracts EMF1 action through modulation of trimethylated 'Lys-4' on histone H3 (H3K4me3) marks on target gene loci (including genes involved in salt stress response and flower development). Collaboratively with RBL and CYP40/SQN, influences floral meristem (FM) determinacy in an AGAMOUS and SUPERMAN-dependent manner, thus contributing to the floral developmental homeostasis. The protein is Protein ULTRAPETALA 1 of Arabidopsis thaliana (Mouse-ear cress).